Here is an 821-residue protein sequence, read N- to C-terminus: Serine/threonine-protein kinase CTR1 (821 aa).

Disordered stretches follow at residues 1 to 76 (MEMP…LNNQ) and 481 to 502 (NPGG…PSAN). A compositionally biased stretch (low complexity) spans 14–25 (SQFSDDQVSVSV). Positions 35-49 (SLSSENRSNHNSGNT) are enriched in polar residues. The Protein kinase domain maps to 551-809 (LNIKEKIGAG…TIMDLLRPLI (259 aa)). ATP-binding positions include 557–565 (IGAGSFGTV) and K578. Catalysis depends on D676, which acts as the Proton acceptor.

The protein belongs to the protein kinase superfamily. TKL Ser/Thr protein kinase family. RAF subfamily. As to quaternary structure, interacts with EIN2 (via C-terminus). Expressed in both seedlings and adult plants.

The catalysed reaction is L-seryl-[protein] + ATP = O-phospho-L-seryl-[protein] + ADP + H(+). It catalyses the reaction L-threonyl-[protein] + ATP = O-phospho-L-threonyl-[protein] + ADP + H(+). Kinase activity is inhibited by C24:1-ceramide during hypoxia (e.g. submergences). Acts as a negative regulator in the ethylene response pathway. Phosphorylates the cytosolic C-terminal domain of EIN2, preventing the signaling in the absence of ethylene. Interacts with C24:1-ceramide upon hypoxic conditions (e.g. submergences) to in turn regulate EIN2 endoplasmic reticulum (ER)-to-nucleus translocation and EIN3 stabilization. The polypeptide is Serine/threonine-protein kinase CTR1 (Arabidopsis thaliana (Mouse-ear cress)).